The following is a 340-amino-acid chain: Dihydroorotate dehydrogenase (quinone) (340 aa).

Residues 65–69 (AGADK) and Thr-89 contribute to the FMN site. Lys-69 provides a ligand contact to substrate. 114–118 (NRNGF) contributes to the substrate binding site. Positions 142 and 175 each coordinate FMN. Asn-175 contacts substrate. The active-site Nucleophile is Ser-178. Asn-180 provides a ligand contact to substrate. FMN contacts are provided by Lys-220 and Thr-248. 249-250 (NT) provides a ligand contact to substrate. Residues Gly-271, Gly-300, and 321-322 (YS) contribute to the FMN site.

The protein belongs to the dihydroorotate dehydrogenase family. Type 2 subfamily. As to quaternary structure, monomer. The cofactor is FMN.

The protein resides in the cell membrane. It catalyses the reaction (S)-dihydroorotate + a quinone = orotate + a quinol. It functions in the pathway pyrimidine metabolism; UMP biosynthesis via de novo pathway; orotate from (S)-dihydroorotate (quinone route): step 1/1. Its function is as follows. Catalyzes the conversion of dihydroorotate to orotate with quinone as electron acceptor. The chain is Dihydroorotate dehydrogenase (quinone) from Actinobacillus succinogenes (strain ATCC 55618 / DSM 22257 / CCUG 43843 / 130Z).